Consider the following 36-residue polypeptide: HSQDTFTNEYNKYLEAKHAQEFVQWLIKSKRRGGLT.

Belongs to the glucagon family.

Its subcellular location is the secreted. In terms of biological role, glucagon plays a key role in glucose metabolism and homeostasis. Regulates blood glucose by increasing gluconeogenesis and decreasing glycolysis. This is Glucagon-2 from Huso dauricus (Kaluga sturgeon).